A 117-amino-acid polypeptide reads, in one-letter code: Putative membrane protein insertion efficiency factor (117 aa).

This sequence belongs to the UPF0161 family.

It is found in the cell inner membrane. Could be involved in insertion of integral membrane proteins into the membrane. The chain is Putative membrane protein insertion efficiency factor from Nitrobacter winogradskyi (strain ATCC 25391 / DSM 10237 / CIP 104748 / NCIMB 11846 / Nb-255).